A 685-amino-acid polypeptide reads, in one-letter code: Galactocerebrosidase (685 aa).

An N-terminal signal peptide occupies residues 1–42 (MAEWLLSASWQRRAKAMTAAAGSAGRAAVPLLLCALLAPGGA). Substrate is bound at residue Thr-109. N-linked (GlcNAc...) asparagine glycosylation is present at Asn-143. Residues Trp-151 and Asn-197 each contribute to the substrate site. The active-site Proton donor/acceptor is the Glu-198. Glu-274 (nucleophile) is an active-site residue. Cys-287 and Cys-394 are oxidised to a cystine. Asn-379 carries an N-linked (GlcNAc...) asparagine glycan. Arg-396 lines the substrate pocket. 4 N-linked (GlcNAc...) asparagine glycosylation sites follow: Asn-403, Asn-556, Asn-559, and Asn-602.

This sequence belongs to the glycosyl hydrolase 59 family. As to expression, detected in urine. Detected in testis, brain and placenta (at protein level). Detected in kidney and liver.

The protein localises to the lysosome. It catalyses the reaction a beta-D-galactosyl-(1&lt;-&gt;1')-N-acylsphing-4-enine + H2O = an N-acylsphing-4-enine + D-galactose. It carries out the reaction beta-D-galactosyl-(1&lt;-&gt;1)-sphing-4-enine + H2O = sphing-4-enine + D-galactose. The enzyme catalyses a D-galactosylceramide + H2O = an N-acyl-sphingoid base + D-galactose. In terms of biological role, hydrolyzes the galactose ester bonds of glycolipids such as galactosylceramide and galactosylsphingosine. Enzyme with very low activity responsible for the lysosomal catabolism of galactosylceramide, a major lipid in myelin, kidney and epithelial cells of small intestine and colon. This is Galactocerebrosidase from Homo sapiens (Human).